Reading from the N-terminus, the 49-residue chain is Large ribosomal subunit protein bL33B (49 aa).

It belongs to the bacterial ribosomal protein bL33 family.

The polypeptide is Large ribosomal subunit protein bL33B (Bacillus cytotoxicus (strain DSM 22905 / CIP 110041 / 391-98 / NVH 391-98)).